A 398-amino-acid chain; its full sequence is Pentalenolactone synthase (398 aa).

Cys-347 is a binding site for heme.

This sequence belongs to the cytochrome P450 family. Heme is required as a cofactor.

It catalyses the reaction pentalenolactone F + 2 reduced [2Fe-2S]-[ferredoxin] + O2 + 2 H(+) = pentalenolactone + 2 oxidized [2Fe-2S]-[ferredoxin] + 2 H2O. It functions in the pathway antibiotic biosynthesis; pentalenolactone biosynthesis. Catalyzes the final step in the biosynthesis of the sesquiterpenoid antibiotic pentalenolactone by mediating the oxidative rearrangement of pentalenolactone F to pentalenolactone. In Streptomyces exfoliatus (Streptomyces hydrogenans), this protein is Pentalenolactone synthase (penM).